The following is a 305-amino-acid chain: Olfactory receptor 5M11 (305 aa).

At 1–25 (MSNTNGSAITEFILLGLTDCPELQS) the chain is on the extracellular side. Asn5 carries an N-linked (GlcNAc...) asparagine glycan. The helical transmembrane segment at 26 to 46 (LLFVLFLVVYLVTLLGNLGMI) threads the bilayer. At 47-54 (MLMRLDSR) the chain is on the cytoplasmic side. The helical transmembrane segment at 55-75 (LHTPMYFFLTNLAFVDLCYTS) threads the bilayer. Topologically, residues 76-98 (NATPQMSTNIVSEKTISFAGCFT) are extracellular. Cysteines 96 and 188 form a disulfide. A helical membrane pass occupies residues 99-119 (QCYIFIALLLTEFYMLAAMAY). Residues 120-138 (DRYVAIYDPLRYSVKTSRR) are Cytoplasmic-facing. Residues 139–159 (VCICLATFPYVYGFSDGLFQA) form a helical membrane-spanning segment. The Extracellular portion of the chain corresponds to 160-195 (ILTFRLTFCRSSVINHFYCADPPLIKLSCSDTYVKE). The chain crosses the membrane as a helical span at residues 196–216 (HAMFISAGFNLSSSLTIVLVS). At 217 to 236 (YAFILAAILRIKSAEGRHKA) the chain is on the cytoplasmic side. The chain crosses the membrane as a helical span at residues 237–257 (FSTCGSHMMAVTLFYGTLFCM). Topologically, residues 258–270 (YIRPPTDKTVEES) are extracellular. Residues 271 to 291 (KIIAVFYTFVSPVLNPLIYSL) form a helical membrane-spanning segment. Residues 292-305 (RNKDVKQALKNVLR) are Cytoplasmic-facing.

This sequence belongs to the G-protein coupled receptor 1 family.

The protein resides in the cell membrane. Its function is as follows. Odorant receptor. The protein is Olfactory receptor 5M11 (OR5M11) of Homo sapiens (Human).